The primary structure comprises 1108 residues: Lon protease homolog, mitochondrial (1108 aa).

The N-terminal 62 residues, 1 to 62, are a transit peptide targeting the mitochondrion; that stretch reads MLRGQSLPWR…RAFSTSSIRR (62 aa). Disordered regions lie at residues 24–192 and 299–318; these read PLLP…QKPS and LPPGEQSKAGNTEDKAPEKK. The span at 36 to 53 shows a compositional bias: low complexity; it reads RSNLSISRLSRSPSLSPR. Composition is skewed to basic and acidic residues over residues 78–103 and 119–146; these read EQKDPNEQKDSDRSPEGRRRSPDSTG and KVAGEKEQRGVEEDAKKENVSIEGKSDP. The segment covering 161–171 has biased composition (polar residues); sequence SDTKSSASNGG. 2 stretches are compositionally biased toward basic and acidic residues: residues 174 to 188 and 309 to 318; these read DGGRKGKKGSGDRAL and NTEDKAPEKK. A Lon N-terminal domain is found at 200-452; it reads VMAIPIAKRP…KALVVLKKEL (253 aa). 605 to 612 contributes to the ATP binding site; it reads GPPGVGKT. Residues 821–855 are compositionally biased toward basic and acidic residues; the sequence is DKALTDEGKAAQEESKKETEEGDPKDPPADPEKST. The disordered stretch occupies residues 821–862; the sequence is DKALTDEGKAAQEESKKETEEGDPKDPPADPEKSTTETPRLA. Residues 895–1081 form the Lon proteolytic domain; that stretch reads TFPPGVTMGL…SEVFNILFAE (187 aa). Residues Ser987 and Lys1030 contribute to the active site.

This sequence belongs to the peptidase S16 family. Homohexamer or homoheptamer. Organized in a ring with a central cavity.

The protein localises to the mitochondrion matrix. It carries out the reaction Hydrolysis of proteins in presence of ATP.. ATP-dependent serine protease that mediates the selective degradation of misfolded, unassembled or oxidatively damaged polypeptides as well as certain short-lived regulatory proteins in the mitochondrial matrix. May also have a chaperone function in the assembly of inner membrane protein complexes. Participates in the regulation of mitochondrial gene expression and in the maintenance of the integrity of the mitochondrial genome. Binds to mitochondrial DNA in a site-specific manner. The polypeptide is Lon protease homolog, mitochondrial (pim1) (Aspergillus fumigatus (strain ATCC MYA-4609 / CBS 101355 / FGSC A1100 / Af293) (Neosartorya fumigata)).